Here is a 261-residue protein sequence, read N- to C-terminus: tRNA pseudouridine synthase A (261 aa).

Asp51 functions as the Nucleophile in the catalytic mechanism. Tyr109 serves as a coordination point for substrate.

Belongs to the tRNA pseudouridine synthase TruA family. Homodimer.

The enzyme catalyses uridine(38/39/40) in tRNA = pseudouridine(38/39/40) in tRNA. Formation of pseudouridine at positions 38, 39 and 40 in the anticodon stem and loop of transfer RNAs. This is tRNA pseudouridine synthase A from Tolumonas auensis (strain DSM 9187 / NBRC 110442 / TA 4).